The following is a 344-amino-acid chain: L-rhamnose-proton symporter (344 aa).

The next 10 helical transmembrane spans lie at 4 to 24 (AIIL…CFYA), 38 to 58 (WSIG…YLLL), 68 to 88 (FSIA…IGNI), 101 to 121 (MGIG…TPIL), 137 to 157 (TLLG…AGLL), 175 to 195 (LILA…MDAA), 207 to 227 (INSL…GAII), 259 to 279 (ILFS…YAWG), 290 to 310 (MSWM…GLLL), and 321 to 341 (VAVL…VGLG).

This sequence belongs to the L-rhamnose transporter (TC 2.A.7.6) family.

The protein resides in the cell inner membrane. It catalyses the reaction L-rhamnopyranose(in) + H(+)(in) = L-rhamnopyranose(out) + H(+)(out). Its function is as follows. Uptake of L-rhamnose across the cytoplasmic membrane with the concomitant transport of protons into the cell (symport system). This is L-rhamnose-proton symporter from Yersinia pseudotuberculosis serotype O:1b (strain IP 31758).